A 955-amino-acid chain; its full sequence is UPF0182 protein tll1193 (955 aa).

Helical transmembrane passes span Val-6 to Leu-26, Trp-53 to Cys-73, Gly-98 to Ala-118, Trp-163 to Phe-183, Leu-186 to Leu-206, Leu-240 to Ala-260, Leu-280 to Tyr-300, Leu-324 to Ile-344, and Gly-354 to Val-374.

This sequence belongs to the UPF0182 family.

It is found in the cell membrane. The sequence is that of UPF0182 protein tll1193 from Thermosynechococcus vestitus (strain NIES-2133 / IAM M-273 / BP-1).